Consider the following 261-residue polypeptide: Segregation and condensation protein A (261 aa).

This sequence belongs to the ScpA family. As to quaternary structure, component of a cohesin-like complex composed of ScpA, ScpB and the Smc homodimer, in which ScpA and ScpB bind to the head domain of Smc. The presence of the three proteins is required for the association of the complex with DNA.

It is found in the cytoplasm. In terms of biological role, participates in chromosomal partition during cell division. May act via the formation of a condensin-like complex containing Smc and ScpB that pull DNA away from mid-cell into both cell halves. This Leptospira interrogans serogroup Icterohaemorrhagiae serovar copenhageni (strain Fiocruz L1-130) protein is Segregation and condensation protein A.